The following is a 1044-amino-acid chain: Elongation factor 3A (1044 aa).

S2 bears the N-acetylserine mark. An HEAT 1 repeat occupies 5 to 42; sequence QQSIKVLEELFQKLSVATADNRHEIASEVASFLNGNII. Residues I42, H44, and S83 each contribute to the ADP site. 6 HEAT repeats span residues 86 to 123, 125 to 162, 166 to 203, 205 to 241, 242 to 279, and 285 to 323; these read PYIV…AVNP, AIKA…AAKD, LRMP…TVDN, DIER…EVTP, ATLS…LVED, and PFLG…VGNV. 2 positions are modified to N6,N6,N6-trimethyllysine: K187 and K196. Residue K350 forms a Glycyl lysine isopeptide (Lys-Gly) (interchain with G-Cter in ubiquitin) linkage. 3 residues coordinate ADP: T392, H396, and E397. The region spanning 426–641 is the ABC transporter 1 domain; the sequence is DEGEDLCNCE…CPAAKAYEEL (216 aa). Residue K636 forms a Glycyl lysine isopeptide (Lys-Gly) (interchain with G-Cter in ubiquitin) linkage. S642 is subject to Phosphoserine. In terms of domain architecture, ABC transporter 2 spans 667–993; the sequence is VKVTNMEFQY…AGPRIEKKED (327 aa). N703 contributes to the ADP binding site. Residue K789 is modified to N6,N6,N6-trimethyllysine. ADP-binding residues include E922, N925, and H951. The residue at position 972 (T972) is a Phosphothreonine. S974 carries the post-translational modification Phosphoserine. The tract at residues 974-1044 is disordered; that stretch reads SGHNWVSGQG…DAYVSSDEEF (71 aa). Residues 1007–1031 show a composition bias toward basic residues; sequence GGKKKKKLSSAELRKKKKERMKKKK. Residues S1039 and S1040 each carry the phosphoserine modification.

It belongs to the ABC transporter superfamily. ABCF family. EF3 subfamily. As to quaternary structure, monomer. Interacts with elongation factor 1A (eEF1A). Interacts through its N-terminus with 18S rRNA. Associates with ribosomes; preferentially binds ribosomes in the post-translocational state (bearing a peptidyl-tRNA in the P-site) in the presence of ATP, suggesting that ATP hydrolysis is required for ribosome dissociation.

The protein resides in the cytoplasm. It localises to the cytosol. It catalyses the reaction ATP + H2O = ADP + phosphate + H(+). It participates in protein biosynthesis; polypeptide chain elongation. With respect to regulation, inhibited by the translational inhibitors neomycin and alpha-sarcin, which suppress the ATPase activity. In terms of biological role, ribosome-dependent ATPase that functions in cytoplasmic translation elongation. Required for the ATP-dependent release of deacylated tRNA from the ribosomal E-site during protein biosynthesis. Stimulates the eEF1A-dependent binding of aminoacyl-tRNA to the ribosomal A-site, which has reduced affinity for tRNA as long as the E-site is occupied. Assists translation termination by stimulating the release of nascent protein from the ribosome by release factors. In nutrient-replete conditions, occupies the space on the ribosome bound by GCN1 during amino acid starvation conditions, and therefore indirectly negatively regulates GCN2 kinase activity in replete conditions. This is Elongation factor 3A (YEF3) from Saccharomyces cerevisiae (strain ATCC 204508 / S288c) (Baker's yeast).